A 511-amino-acid polypeptide reads, in one-letter code: MFS-type transporper mpsC (511 aa).

The segment covering 1-35 has biased composition (basic and acidic residues); sequence MTSSTESKHSNDESTDLEKQDAEESHGLPEERKQD. A disordered region spans residues 1–65; it reads MTSSTESKHS…PDDPANPMNW (65 aa). Transmembrane regions (helical) follow at residues 74–94, 108–128, 147–167, 169–189, 201–221, 228–248, and 303–323; these read VVMASLTTLFANITSTAFAPA, ITAALTVSIYLLGFAFGPLVI, ITVAFLIGCAQAKNLGMFLVF, LITGIAGSGPGTIGGGTIADV, AFAMGPLMGPVLGPLMSGFIA, WVFRVLCIATGVMTIVLYFVM, and PITLLLSLYCAFVFGLLILLF. The N-linked (GlcNAc...) asparagine glycan is linked to Asn337. Helical transmembrane passes span 342–362, 383–403, 411–431, 443–465, and 476–496; these read GLSYLGLGFGLAIGLVLFGML, LLLMVWFAPVIPGGFFWYGWT, ILPMMGTSLIGMGALMVMMPI, VAASALAANTLLRSLAGCFLPLA, and GWGNTLLGFIAIGFTCLPILF.

This sequence belongs to the major facilitator superfamily.

It localises to the membrane. Functionally, MFS-type transporper; part of the gene cluster that mediates the biosynthesis of macrophasetins, 3-decalinoyltetramic acids (DTAs) which feature a tetramate (pyrrolidine-2,4-dione) unit connected to a decalin fragment and that have potent bioactivities. Efflux pump that might be required for efficient secretion of macrophasetins. The polypeptide is MFS-type transporper mpsC (Macrophomina phaseolina (strain MS6) (Charcoal rot fungus)).